The sequence spans 604 residues: Dopamine receptor 3 (604 aa).

At 1 to 23 (MLTGQHHIPGIESPLMVVLWRVA) the chain is on the extracellular side. The chain crosses the membrane as a helical span at residues 24–44 (AGVFLPLVPTMAVFGNVLVIL). The Cytoplasmic segment spans residues 45 to 58 (SVYRERNLQTVTNM). The helical transmembrane segment at 59–79 (LIVSLAVSDLFVAIGVMSFGV) threads the bilayer. Topologically, residues 80 to 96 (YYEWNGFKWGLGSFFCH) are extracellular. Residues C95 and C170 are joined by a disulfide bond. Residues 97–117 (VYQALDVACSTASILNLLAIS) traverse the membrane as a helical segment. Residues 118 to 141 (LDRYIAIGHPISYAQYGARGGRAM) lie on the Cytoplasmic side of the membrane. Residues 142-162 (ISITIVWGVSCAVALPLLLGV) traverse the membrane as a helical segment. The Extracellular segment spans residues 163–179 (NPMENDQCELANPWFNM). A helical membrane pass occupies residues 180 to 200 (ISSIFSFFIPCIAMIILYTII). Residues 201–520 (FRRLRQRERA…TKQMRREHKA (320 aa)) lie on the Cytoplasmic side of the membrane. The segment at 399 to 430 (SIQDEKKMNSRPPENPFAHQNGTNKQRLLPNP) is disordered. The helical transmembrane segment at 521–541 (TVTLAVVLAVFLFCWLPFFIL) threads the bilayer. Residues 542-559 (HLSNSICLVIDSNSDCIG) are Extracellular-facing. Residues 560 to 580 (FLPLYLATWLGYLNSSLNPLI) form a helical membrane-spanning segment. Residues 581 to 604 (YTVFDQRFRNAFRNILSCGFFKKR) lie on the Cytoplasmic side of the membrane.

The protein belongs to the G-protein coupled receptor 1 family.

It localises to the cell membrane. Its function is as follows. Receptor for dopamine. The activity of this receptor is mediated by G proteins which activate adenylyl cyclase. In terms of antagonist responses, would be classed with the D2-like dopamine receptor group. Mediates the effect of dopamine on the inhibition of locomotion. Acts as an antagonist of dop-1. This Caenorhabditis briggsae protein is Dopamine receptor 3.